Reading from the N-terminus, the 220-residue chain is HTH-type transcriptional repressor GlaR (220 aa).

The 69-residue stretch at 1 to 69 (MTITSLDGYR…NQKGYRVASM (69 aa)) folds into the HTH gntR-type domain. Residues 29–48 (MSLLTSRYALGVGPLREALS) constitute a DNA-binding region (H-T-H motif).

It localises to the cytoplasm. The repressive effect at the glaH promoter site is specifically relieved upon glutarate binding. Its function is as follows. Negatively regulates the expression of the glaH-lhgD-gabDTP operon in a temporal manner during entry into stationary phase or during the first few hours of carbon starvation. Thereby is involved in the regulation of a L-lysine degradation pathway that proceeds via cadaverine, glutarate and L-2-hydroxyglutarate. Binds to two primary and two secondary sites in the promoter region of the glaH operon with the consensus sequences TTGTN5TTTT and ATGTN5TTTT of the primary sites, each separated by six nucleotides. This chain is HTH-type transcriptional repressor GlaR, found in Escherichia coli (strain K12).